The primary structure comprises 479 residues: Catalase A (479 aa).

The span at 1-21 (MSKILTTASGAPVADNQNSRS) shows a compositional bias: polar residues. Positions 1 to 25 (MSKILTTASGAPVADNQNSRSAGPR) are disordered. Active-site residues include His-53 and Asn-126. Tyr-336 is a binding site for heme. Positions 350 to 376 (QLPVNAPRCPVNSYQRDGSMATGSYGS) are disordered. Positions 361-376 (NSYQRDGSMATGSYGS) are enriched in polar residues.

It belongs to the catalase family. Heme serves as cofactor.

It carries out the reaction 2 H2O2 = O2 + 2 H2O. Activated by peroxide. Functionally, the major expressed catalase protein in strain Corvallis in stationary phase. Decomposes hydrogen peroxide into water and oxygen; serves to protect cells from the toxic effects of hydrogen peroxide. This is Catalase A (katA) from Pseudomonas putida (Arthrobacter siderocapsulatus).